We begin with the raw amino-acid sequence, 207 residues long: LexA repressor (207 aa).

Positions 28–48 (RAEIAQKLGFKSANAAEEHLK) form a DNA-binding region, H-T-H motif. Active-site for autocatalytic cleavage activity residues include Ser124 and Lys161.

Belongs to the peptidase S24 family. As to quaternary structure, homodimer.

It carries out the reaction Hydrolysis of Ala-|-Gly bond in repressor LexA.. Its function is as follows. Represses a number of genes involved in the response to DNA damage (SOS response), including recA and lexA. In the presence of single-stranded DNA, RecA interacts with LexA causing an autocatalytic cleavage which disrupts the DNA-binding part of LexA, leading to derepression of the SOS regulon and eventually DNA repair. This is LexA repressor from Aeromonas hydrophila subsp. hydrophila (strain ATCC 7966 / DSM 30187 / BCRC 13018 / CCUG 14551 / JCM 1027 / KCTC 2358 / NCIMB 9240 / NCTC 8049).